A 295-amino-acid polypeptide reads, in one-letter code: MEKKLTLLLLVVVVLFVNLTNATVRVQICPRESAKDYILGFRDKSALHRPGFVTEGDDRWLQMAADMVDKKNKCDYAALLFYASWCPFSRLVRPSFDLMSLLYSSVPHFAIEESSVKASTLSKYGVHGFPTIILMNSTMLVVYRGSRTLDSLVAFYTDVTGIETMDERWVERNRLVPHFHAEPENCPFPWARRSPENLLRQETYLTLATVFVLLRLLHLISPTMVVFVKFTWGRVSNMRLGNPLEHTVTMYLKEPCMSSNLQEGAMNARAWASKSLATVSIAESSSSSRSVSASQ.

Residues 1–22 (MEKKLTLLLLVVVVLFVNLTNA) form the signal peptide. The region spanning 23 to 161 (TVRVQICPRE…LVAFYTDVTG (139 aa)) is the Thioredoxin domain. N-linked (GlcNAc...) asparagine glycosylation is present at N136. The helical transmembrane segment at 208–228 (ATVFVLLRLLHLISPTMVVFV) threads the bilayer.

It localises to the membrane. The sequence is that of 5'-adenylylsulfate reductase-like 6 (APRL6) from Arabidopsis thaliana (Mouse-ear cress).